The chain runs to 239 residues: Leucine-rich repeat-containing protein 57 (239 aa).

Glycine 2 is lipidated: N-myristoyl glycine. 8 LRR repeats span residues 39–60 (NLRT…LIGK), 63–84 (LLKS…ICNL), 86–107 (KLET…FGQL), 109–131 (ALKT…CSLR), 132–153 (HLDV…VGEL), 154–175 (QVIE…ISCC), 177–197 (RLKI…PQSI), and 202–222 (QICL…RELE).

The protein localises to the membrane. The sequence is that of Leucine-rich repeat-containing protein 57 (LRRC57) from Homo sapiens (Human).